We begin with the raw amino-acid sequence, 373 residues long: Anhydro-N-acetylmuramic acid kinase (373 aa).

Residue 12–19 participates in ATP binding; sequence GTSLDGVD.

It belongs to the anhydro-N-acetylmuramic acid kinase family.

The enzyme catalyses 1,6-anhydro-N-acetyl-beta-muramate + ATP + H2O = N-acetyl-D-muramate 6-phosphate + ADP + H(+). It participates in amino-sugar metabolism; 1,6-anhydro-N-acetylmuramate degradation. The protein operates within cell wall biogenesis; peptidoglycan recycling. Functionally, catalyzes the specific phosphorylation of 1,6-anhydro-N-acetylmuramic acid (anhMurNAc) with the simultaneous cleavage of the 1,6-anhydro ring, generating MurNAc-6-P. Is required for the utilization of anhMurNAc either imported from the medium or derived from its own cell wall murein, and thus plays a role in cell wall recycling. The protein is Anhydro-N-acetylmuramic acid kinase of Salmonella agona (strain SL483).